The sequence spans 944 residues: Protocadherin gamma-C5 (944 aa).

Residues 1–29 form the signal peptide; sequence MGPKTLPQLAGKWQVLCMLSLCCWGWVSG. Cadherin domains lie at 30 to 133, 134 to 242, 243 to 350, 351 to 454, 455 to 564, and 571 to 677; these read QLRY…SPSF, ATPE…APTF, QSSV…APEV, LLAS…APRF, NQQL…APAV, and WEHS…MPKS. Residues 30-693 are Extracellular-facing; sequence QLRYSVVEES…PPERSDLTLY (664 aa). N-linked (GlcNAc...) asparagine glycosylation is found at asparagine 265, asparagine 443, and asparagine 547. The chain crosses the membrane as a helical span at residues 694–714; sequence LIVALATVSLLSLVTFTFLSA. Residues 715 to 944 lie on the Cytoplasmic side of the membrane; that stretch reads KCLQGNADGD…KKKSGKKEKK (230 aa). Disordered regions lie at residues 722–747, 812–853, and 914–944; these read DGDG…QSSP, SNTL…WPNN, and ATLT…KEKK. Positions 820–853 are enriched in polar residues; it reads QQAPPNTDWRFSQAQRPGTSGSQNGDDTGTWPNN. Basic residues predominate over residues 934-944; it reads NKKKSGKKEKK.

It is found in the cell membrane. Its function is as follows. Potential calcium-dependent cell-adhesion protein. May be involved in the establishment and maintenance of specific neuronal connections in the brain. This Homo sapiens (Human) protein is Protocadherin gamma-C5 (PCDHGC5).